The sequence spans 284 residues: Ribose-phosphate pyrophosphokinase (284 aa).

Residues 34 to 36 (DNE) and 92 to 93 (RQ) contribute to the ATP site. Residues His-125 and Asp-163 each contribute to the Mg(2+) site. Residue Lys-186 is part of the active site. D-ribose 5-phosphate-binding positions include Arg-188, Asp-212, and 216–220 (STGGT).

The protein belongs to the ribose-phosphate pyrophosphokinase family. Class III (archaeal) subfamily. In terms of assembly, homotetramer. It depends on Mg(2+) as a cofactor.

Its subcellular location is the cytoplasm. The enzyme catalyses D-ribose 5-phosphate + ATP = 5-phospho-alpha-D-ribose 1-diphosphate + AMP + H(+). It functions in the pathway metabolic intermediate biosynthesis; 5-phospho-alpha-D-ribose 1-diphosphate biosynthesis; 5-phospho-alpha-D-ribose 1-diphosphate from D-ribose 5-phosphate (route I): step 1/1. With respect to regulation, activated by inorganic phosphate, with a maximal activity at 190 mM. Above this concentration inorganic phosphate progressively inhibits the kinase. Completely inhibited by ADP, and partially inhibited by alpha,beta-methylene ATP (mATP). Lack of allosteric regulation. In terms of biological role, involved in the biosynthesis of the central metabolite phospho-alpha-D-ribosyl-1-pyrophosphate (PRPP) via the transfer of pyrophosphoryl group from ATP to 1-hydroxyl of ribose-5-phosphate (Rib-5-P). It can also use dATP as diphosphoryl donor. In Methanocaldococcus jannaschii (strain ATCC 43067 / DSM 2661 / JAL-1 / JCM 10045 / NBRC 100440) (Methanococcus jannaschii), this protein is Ribose-phosphate pyrophosphokinase.